The following is a 335-amino-acid chain: Large ribosomal subunit protein uL10 (335 aa).

A disordered region spans residues 304–335; that stretch reads GAAAPVEEAPVEEKKEEKKEEAAPAAGLGMLF. Basic and acidic residues predominate over residues 314-325; the sequence is VEEKKEEKKEEA.

Belongs to the universal ribosomal protein uL10 family. As to quaternary structure, part of the 50S ribosomal subunit. Forms part of the ribosomal stalk which helps the ribosome interact with GTP-bound translation factors. Forms a heptameric L10(L12)2(L12)2(L12)2 complex, where L10 forms an elongated spine to which the L12 dimers bind in a sequential fashion.

Forms part of the ribosomal stalk, playing a central role in the interaction of the ribosome with GTP-bound translation factors. The chain is Large ribosomal subunit protein uL10 from Methanococcus maripaludis (strain C6 / ATCC BAA-1332).